The chain runs to 344 residues: Intraflagellar transport protein 46 (344 aa).

The span at 1–16 shows a compositional bias: acidic residues; that stretch reads MDDSMDYPDRDGDDLD. The tract at residues 1–100 is disordered; the sequence is MDDSMDYPDR…IANSDEAPPG (100 aa). The segment covering 18-30 has biased composition (polar residues); that stretch reads FQGTARSQVVQNQ.

Belongs to the IFT46 family. As to quaternary structure, component of the IFT complex B, the core composed of IFT25, IFT27, IFT46, IFT52, IFT74, IFT81 and IFT88 as well as associated subunits IFT20, IFT57, IFT80 and IFT172. Interacts with IFT25, IFT52, IFT70, IFT88 and DAW1.

Its subcellular location is the cytoplasm. The protein resides in the cytoskeleton. The protein localises to the cilium basal body. It localises to the cell projection. It is found in the cilium. In terms of biological role, forms part of a complex involved in intraflagellar transport (IFT), the bi-directional movement of particles required for the assembly, maintenance and functioning of primary cilia. Plays a role in maintaining IFT complex B stability. This is Intraflagellar transport protein 46 from Chlamydomonas reinhardtii (Chlamydomonas smithii).